A 202-amino-acid chain; its full sequence is Ribonuclease HII (202 aa).

The 190-residue stretch at 12–201 (LLIAGVDEAG…VRQLKLFIPE (190 aa)) folds into the RNase H type-2 domain. The a divalent metal cation site is built by Asp-18, Glu-19, and Asp-110.

This sequence belongs to the RNase HII family. Requires Mn(2+) as cofactor. It depends on Mg(2+) as a cofactor.

The protein localises to the cytoplasm. It carries out the reaction Endonucleolytic cleavage to 5'-phosphomonoester.. In terms of biological role, endonuclease that specifically degrades the RNA of RNA-DNA hybrids. This is Ribonuclease HII from Coxiella burnetii (strain CbuG_Q212) (Coxiella burnetii (strain Q212)).